The following is an 89-amino-acid chain: Mitochondrial import inner membrane translocase subunit Tim9 (89 aa).

Position 2 is an N-acetylalanine (A2). The Twin CX3C motif signature appears at 28-52 (CFLDCVKDFTTREVKPEEVTCSEHC). 2 disulfides stabilise this stretch: C28–C52 and C32–C48.

Belongs to the small Tim family. As to quaternary structure, heterohexamer; composed of 3 copies of TIMM9 and 3 copies of TIMM10/TIM10A, named soluble 70 kDa complex. The complex forms a 6-bladed alpha-propeller structure and associates with the TIMM22 component of the TIM22 complex. Interacts with multi-pass transmembrane proteins in transit. Also forms a complex composed of TIMM9, TIMM10/TIM10A and FXC1/TIM10B.

The protein resides in the mitochondrion inner membrane. Mitochondrial intermembrane chaperone that participates in the import and insertion of multi-pass transmembrane proteins into the mitochondrial inner membrane. May also be required for the transfer of beta-barrel precursors from the TOM complex to the sorting and assembly machinery (SAM complex) of the outer membrane. Acts as a chaperone-like protein that protects the hydrophobic precursors from aggregation and guide them through the mitochondrial intermembrane space. This Mus musculus (Mouse) protein is Mitochondrial import inner membrane translocase subunit Tim9 (Timm9).